A 433-amino-acid chain; its full sequence is UDP-N-acetylmuramate--L-alanine ligase (433 aa).

108–114 (GAHGKTS) lines the ATP pocket.

This sequence belongs to the MurCDEF family.

It localises to the cytoplasm. It catalyses the reaction UDP-N-acetyl-alpha-D-muramate + L-alanine + ATP = UDP-N-acetyl-alpha-D-muramoyl-L-alanine + ADP + phosphate + H(+). It participates in cell wall biogenesis; peptidoglycan biosynthesis. Cell wall formation. In Anoxybacillus flavithermus (strain DSM 21510 / WK1), this protein is UDP-N-acetylmuramate--L-alanine ligase.